An 87-amino-acid chain; its full sequence is Large ribosomal subunit protein bL31B (87 aa).

This sequence belongs to the bacterial ribosomal protein bL31 family. Type B subfamily. As to quaternary structure, part of the 50S ribosomal subunit.

This Staphylococcus carnosus (strain TM300) protein is Large ribosomal subunit protein bL31B.